Reading from the N-terminus, the 195-residue chain is uncharacterized protein (195 aa).

This is an uncharacterized protein from Schizosaccharomyces pombe (strain 972 / ATCC 24843) (Fission yeast).